The chain runs to 339 residues: ATP-dependent 6-phosphofructokinase (339 aa).

ATP contacts are provided by residues Gly-11, 72 to 73 (RY), and 102 to 105 (GDGS). Asp-103 contributes to the Mg(2+) binding site. Substrate is bound by residues 125-127 (TID), Arg-162, and 169-171 (MGR). The active-site Proton acceptor is the Asp-127. Residues 185–187 (GAD) and 214–216 (KSH) each bind ADP. Substrate contacts are provided by residues Glu-223, Arg-245, and 251-254 (HVIR).

This sequence belongs to the phosphofructokinase type A (PFKA) family. ATP-dependent PFK group I subfamily. Prokaryotic clade 'B1' sub-subfamily. Homotetramer. Mg(2+) is required as a cofactor.

The protein localises to the cytoplasm. The enzyme catalyses beta-D-fructose 6-phosphate + ATP = beta-D-fructose 1,6-bisphosphate + ADP + H(+). Its pathway is carbohydrate degradation; glycolysis; D-glyceraldehyde 3-phosphate and glycerone phosphate from D-glucose: step 3/4. Allosterically activated by ADP and other diphosphonucleosides, and allosterically inhibited by phosphoenolpyruvate. Catalyzes the phosphorylation of D-fructose 6-phosphate to fructose 1,6-bisphosphate by ATP, the first committing step of glycolysis. The polypeptide is ATP-dependent 6-phosphofructokinase (Streptococcus thermophilus (strain ATCC BAA-491 / LMD-9)).